The chain runs to 312 residues: Peptide methionine sulfoxide reductase MsrA/MsrB 1 (312 aa).

Residues 1 to 155 (MAEIYLAGGC…PSGYCHIDVT (155 aa)) form a peptide methionine sulfoxide reductase region. Residue Cys-10 is part of the active site. Residues 172 to 295 (QEVLKASLSE…NSASLRFVAK (124 aa)) enclose the MsrB domain. Catalysis depends on Cys-284, which acts as the Nucleophile.

In the N-terminal section; belongs to the MsrA Met sulfoxide reductase family. The protein in the C-terminal section; belongs to the MsrB Met sulfoxide reductase family.

Its subcellular location is the cell membrane. It catalyses the reaction L-methionyl-[protein] + [thioredoxin]-disulfide + H2O = L-methionyl-(S)-S-oxide-[protein] + [thioredoxin]-dithiol. The enzyme catalyses [thioredoxin]-disulfide + L-methionine + H2O = L-methionine (S)-S-oxide + [thioredoxin]-dithiol. It carries out the reaction L-methionyl-[protein] + [thioredoxin]-disulfide + H2O = L-methionyl-(R)-S-oxide-[protein] + [thioredoxin]-dithiol. Its function is as follows. Has an important function as a repair enzyme for proteins that have been inactivated by oxidation. Catalyzes the reversible oxidation-reduction of methionine sulfoxide in proteins to methionine. The sequence is that of Peptide methionine sulfoxide reductase MsrA/MsrB 1 (msrAB1) from Streptococcus pneumoniae serotype 4 (strain ATCC BAA-334 / TIGR4).